The primary structure comprises 246 residues: 4-hydroxy-tetrahydrodipicolinate reductase (246 aa).

NAD(+) contacts are provided by residues 8 to 13 (GALGRM), Asp-34, 74 to 76 (GTT), and 101 to 104 (APNF). His-131 functions as the Proton donor/acceptor in the catalytic mechanism. His-132 contacts (S)-2,3,4,5-tetrahydrodipicolinate. The Proton donor role is filled by Lys-135. 141–142 (GT) lines the (S)-2,3,4,5-tetrahydrodipicolinate pocket.

The protein belongs to the DapB family.

It is found in the cytoplasm. The enzyme catalyses (S)-2,3,4,5-tetrahydrodipicolinate + NAD(+) + H2O = (2S,4S)-4-hydroxy-2,3,4,5-tetrahydrodipicolinate + NADH + H(+). It carries out the reaction (S)-2,3,4,5-tetrahydrodipicolinate + NADP(+) + H2O = (2S,4S)-4-hydroxy-2,3,4,5-tetrahydrodipicolinate + NADPH + H(+). It functions in the pathway amino-acid biosynthesis; L-lysine biosynthesis via DAP pathway; (S)-tetrahydrodipicolinate from L-aspartate: step 4/4. Its function is as follows. Catalyzes the conversion of 4-hydroxy-tetrahydrodipicolinate (HTPA) to tetrahydrodipicolinate. This chain is 4-hydroxy-tetrahydrodipicolinate reductase, found in Thermobifida fusca (strain YX).